The primary structure comprises 327 residues: MIDLFINIASFTIYGIPVIPLFIIVFVILSYYLLLLHDESPLWLEKENVYIDVKEGEQHQFPSLVENKNPIDNIYLSVIVPAYNEQIRLPSMLDDAIKFLNEKSKKDLKFSYEIIIIDDGSKDSTAKLVTSYIEKQPSSNIRLLKLKQNRGKGGAVKRGILCSRGKYCLMVDADGATEFKDFNRVEDIMHKIEKNDLGIVCGSRSHLVDSDLVAKRSFLRNILMYGFHIFVQTLCVKGIKDTQCGFKLFTRETARRIFPTLHIERWAFDVEILYLAQKLNIPIAEVAVNWTEIDGSKLDPFSSSIQMAKDIVRIRFRYLLGIWKIKS.

Topologically, residues 1–15 (MIDLFINIASFTIYG) are lumenal. A helical membrane pass occupies residues 16 to 36 (IPVIPLFIIVFVILSYYLLLL). Residues 37–327 (HDESPLWLEK…YLLGIWKIKS (291 aa)) lie on the Cytoplasmic side of the membrane.

It belongs to the glycosyltransferase 2 family.

The protein localises to the endoplasmic reticulum membrane. It catalyses the reaction a di-trans,poly-cis-dolichyl phosphate + UDP-alpha-D-glucose = a di-trans,poly-cis-dolichyl beta-D-glucosyl phosphate + UDP. Its pathway is protein modification; protein glycosylation. In terms of biological role, endoplasmic reticulum membrane-bound UDP-glucose:dolichyl-phosphate glucosyltransferase involved in protein N-linked glycosylation. This Dictyostelium discoideum (Social amoeba) protein is Dolichyl-phosphate beta-glucosyltransferase (alg5).